Here is a 417-residue protein sequence, read N- to C-terminus: Serine hydroxymethyltransferase (417 aa).

Residues leucine 120 and 124-126 (GHL) contribute to the (6S)-5,6,7,8-tetrahydrofolate site. At lysine 229 the chain carries N6-(pyridoxal phosphate)lysine.

The protein belongs to the SHMT family. As to quaternary structure, homodimer. Pyridoxal 5'-phosphate serves as cofactor.

Its subcellular location is the cytoplasm. It carries out the reaction (6R)-5,10-methylene-5,6,7,8-tetrahydrofolate + glycine + H2O = (6S)-5,6,7,8-tetrahydrofolate + L-serine. Its pathway is one-carbon metabolism; tetrahydrofolate interconversion. It participates in amino-acid biosynthesis; glycine biosynthesis; glycine from L-serine: step 1/1. Catalyzes the reversible interconversion of serine and glycine with tetrahydrofolate (THF) serving as the one-carbon carrier. This reaction serves as the major source of one-carbon groups required for the biosynthesis of purines, thymidylate, methionine, and other important biomolecules. Also exhibits THF-independent aldolase activity toward beta-hydroxyamino acids, producing glycine and aldehydes, via a retro-aldol mechanism. The polypeptide is Serine hydroxymethyltransferase (Anaeromyxobacter sp. (strain K)).